The primary structure comprises 90 residues: MASKKAGGSTRNGRDSEAKRLGVKAYGNELIPAGSIIVRQRGTKFHAGDNVGMGKDHTLFAKVDGYVEFKTKGALNRKTVSIRPYTGSEE.

The interval 1–21 (MASKKAGGSTRNGRDSEAKRL) is disordered.

Belongs to the bacterial ribosomal protein bL27 family.

This chain is Large ribosomal subunit protein bL27, found in Neisseria meningitidis serogroup C (strain 053442).